The primary structure comprises 414 residues: Heterogeneous nuclear ribonucleoprotein F (414 aa).

Position 1 is an N-acetylmethionine (M1). At M2 the chain carries N-acetylmethionine; in Heterogeneous nuclear ribonucleoprotein F, N-terminally processed. An RRM 1 domain is found at F11–R90. Residue K72 forms a Glycyl lysine isopeptide (Lys-Gly) (interchain with G-Cter in SUMO) linkage. The segment at R81 to F86 is interaction with RNA. K87 participates in a covalent cross-link: Glycyl lysine isopeptide (Lys-Gly) (interchain with G-Cter in SUMO2). S104 and S161 each carry phosphoserine. Residues G111 to Q188 enclose the RRM 2 domain. K167 participates in a covalent cross-link: Glycyl lysine isopeptide (Lys-Gly) (interchain with G-Cter in SUMO2). The interval R179–F184 is interaction with RNA. K185 is covalently cross-linked (Glycyl lysine isopeptide (Lys-Gly) (interchain with G-Cter in SUMO2)). Residues S187, S193, and S195 each carry the phosphoserine modification. At K200 the chain carries N6-acetyllysine; alternate. K200 is covalently cross-linked (Glycyl lysine isopeptide (Lys-Gly) (interchain with G-Cter in SUMO2); alternate). The residue at position 215 (T215) is a Phosphothreonine. At K224 the chain carries N6-acetyllysine; alternate. Residue K224 forms a Glycyl lysine isopeptide (Lys-Gly) (interchain with G-Cter in SUMO2); alternate linkage. Position 265 is a phosphoserine (S265). Residues H289 to G366 enclose the RRM 3 domain. The segment at R355–F360 is interaction with RNA.

As to quaternary structure, identified in the spliceosome C complex. Interacts with AGO1, AGO2, TBP and TXNL4/DIM1. Post-translationally, sumoylated.

The protein resides in the nucleus. The protein localises to the nucleoplasm. Its function is as follows. Component of the heterogeneous nuclear ribonucleoprotein (hnRNP) complexes which provide the substrate for the processing events that pre-mRNAs undergo before becoming functional, translatable mRNAs in the cytoplasm. Plays a role in the regulation of alternative splicing events. Binds G-rich sequences in pre-mRNAs and keeps target RNA in an unfolded state. This Bos taurus (Bovine) protein is Heterogeneous nuclear ribonucleoprotein F (HNRNPF).